Reading from the N-terminus, the 430-residue chain is Protein translocase subunit SecY (430 aa).

10 consecutive transmembrane segments (helical) span residues 18–38, 68–88, 117–137, 148–168, 179–199, 215–235, 270–290, 308–328, 368–388, and 390–410; these read IFFT…PAPG, FSIF…MQLL, FAII…NNYL, MSYL…LWLG, GISI…LIQF, LQVA…VYVL, VIPV…TMFF, NIGM…YAFV, FVGS…TKFM, and LPQS…VAIE.

It belongs to the SecY/SEC61-alpha family. In terms of assembly, component of the Sec protein translocase complex. Heterotrimer consisting of SecY, SecE and SecG subunits. The heterotrimers can form oligomers, although 1 heterotrimer is thought to be able to translocate proteins. Interacts with the ribosome. Interacts with SecDF, and other proteins may be involved. Interacts with SecA.

The protein localises to the cell membrane. In terms of biological role, the central subunit of the protein translocation channel SecYEG. Consists of two halves formed by TMs 1-5 and 6-10. These two domains form a lateral gate at the front which open onto the bilayer between TMs 2 and 7, and are clamped together by SecE at the back. The channel is closed by both a pore ring composed of hydrophobic SecY resides and a short helix (helix 2A) on the extracellular side of the membrane which forms a plug. The plug probably moves laterally to allow the channel to open. The ring and the pore may move independently. The chain is Protein translocase subunit SecY from Staphylococcus carnosus (strain TM300).